The primary structure comprises 230 residues: Lecithin retinol acyltransferase (230 aa).

Residues Met-1–Ser-194 are Cytoplasmic-facing. Positions Val-50–Gln-177 constitute an LRAT domain. Residues His-60 and His-72 contribute to the active site. Cys-161 serves as the catalytic Acyl-thioester intermediate. The chain crosses the membrane as a helical span at residues Val-195–Thr-215. Topologically, residues Thr-216–Gly-230 are lumenal.

It belongs to the H-rev107 family. In terms of tissue distribution, hepatic stellate cells and endothelial cells (at protein level). Found at high levels in testis and liver, followed by retinal pigment epithelium, small intestine, prostate, pancreas and colon. Low expression observed in brain. In fetal tissues, expressed in retinal pigment epithelium and liver, and barely in the brain.

The protein resides in the endoplasmic reticulum membrane. It is found in the rough endoplasmic reticulum. It localises to the endosome. The protein localises to the multivesicular body. Its subcellular location is the cytoplasm. The protein resides in the perinuclear region. It catalyses the reaction all-trans-retinol--[retinol-binding protein] + a 1,2-diacyl-sn-glycero-3-phosphocholine = apo--[retinol-binding protein] + an all-trans-retinyl ester + a 2-acyl-sn-glycero-3-phosphocholine. It carries out the reaction 1,2-dihexadecanoyl-sn-glycero-3-phosphocholine + all-trans-retinol = all-trans-retinyl hexadecanoate + 2-hexadecanoyl-sn-glycero-3-phosphocholine. The catalysed reaction is 1,2-diheptanoyl-sn-glycero-3-phosphocholine + all-trans-retinol--[retinol-binding protein] = all-trans-retinyl heptanoate + 2-heptanoyl-sn-glycero-3-phosphocholine + apo--[retinol-binding protein]. The enzyme catalyses 1,2-dioctanoyl-sn-glycero-3-phosphocholine + all-trans-retinol--[retinol-binding protein] = 2-octanoyl-sn-glycero-3-phosphocholine + all-trans-retinyl octanoate + apo--[retinol-binding protein]. It catalyses the reaction all-trans-retinol--[retinol-binding protein] + 1,2-dihexadecanoyl-sn-glycero-3-phosphocholine = apo--[retinol-binding protein] + all-trans-retinyl hexadecanoate + 2-hexadecanoyl-sn-glycero-3-phosphocholine. It carries out the reaction 1,2-didodecanoyl-sn-glycero-3-phosphocholine + all-trans-retinol--[retinol-binding protein] = 2-dodecanoyl-sn-glycero-3-phosphocholine + all-trans-retinyl dodecanoate + apo--[retinol-binding protein]. The protein operates within cofactor metabolism; retinol metabolism. Inhibited by all-trans-retinyl alpha-bromoacetate and N-boc-L-biocytinyl-11-aminoundecane chloro-methyl ketone (BACMK). Functionally, transfers the acyl group from the sn-1 position of phosphatidylcholine to all-trans retinol, producing all-trans retinyl esters. Retinyl esters are storage forms of vitamin A. LRAT plays a critical role in vision. It provides the all-trans retinyl ester substrates for the isomerohydrolase which processes the esters into 11-cis-retinol in the retinal pigment epithelium; due to a membrane-associated alcohol dehydrogenase, 11 cis-retinol is oxidized and converted into 11-cis-retinaldehyde which is the chromophore for rhodopsin and the cone photopigments. Required for the survival of cone photoreceptors and correct rod photoreceptor cell morphology. The sequence is that of Lecithin retinol acyltransferase from Homo sapiens (Human).